The sequence spans 194 residues: Isopentenyl-diphosphate Delta-isomerase (194 aa).

His-27 and His-34 together coordinate Mn(2+). Positions 32 to 166 (ALHLAFSCHV…PWAFSPWLTL (135 aa)) constitute a Nudix hydrolase domain. The active site involves Cys-69. His-71 is a Mn(2+) binding site. Position 89 (Glu-89) interacts with Mg(2+). Mn(2+)-binding residues include Glu-116 and Glu-118. Residue Glu-118 is part of the active site.

It belongs to the IPP isomerase type 1 family. Requires Mg(2+) as cofactor. Mn(2+) is required as a cofactor.

Its subcellular location is the cytoplasm. It catalyses the reaction isopentenyl diphosphate = dimethylallyl diphosphate. It participates in isoprenoid biosynthesis; dimethylallyl diphosphate biosynthesis; dimethylallyl diphosphate from isopentenyl diphosphate: step 1/1. In terms of biological role, catalyzes the 1,3-allylic rearrangement of the homoallylic substrate isopentenyl (IPP) to its highly electrophilic allylic isomer, dimethylallyl diphosphate (DMAPP). This chain is Isopentenyl-diphosphate Delta-isomerase, found in Clavibacter michiganensis subsp. michiganensis (strain NCPPB 382).